The chain runs to 317 residues: Beta-ketoacyl-[acyl-carrier-protein] synthase III (317 aa).

Active-site residues include cysteine 112 and histidine 244. Residues 245-249 are ACP-binding; sequence QANLR. Asparagine 274 is an active-site residue.

It belongs to the thiolase-like superfamily. FabH family. Homodimer.

It localises to the cytoplasm. The enzyme catalyses malonyl-[ACP] + acetyl-CoA + H(+) = 3-oxobutanoyl-[ACP] + CO2 + CoA. It functions in the pathway lipid metabolism; fatty acid biosynthesis. Functionally, catalyzes the condensation reaction of fatty acid synthesis by the addition to an acyl acceptor of two carbons from malonyl-ACP. Catalyzes the first condensation reaction which initiates fatty acid synthesis and may therefore play a role in governing the total rate of fatty acid production. Possesses both acetoacetyl-ACP synthase and acetyl transacylase activities. Its substrate specificity determines the biosynthesis of branched-chain and/or straight-chain of fatty acids. The chain is Beta-ketoacyl-[acyl-carrier-protein] synthase III from Citrobacter koseri (strain ATCC BAA-895 / CDC 4225-83 / SGSC4696).